The chain runs to 387 residues: MNLHEYQAKQLFASYGLPVPRGEVAYNVEDALLVASQLSTSRWVVKAQVHAGGRGKAGGVKLVSSKDELAAVAKSMLGTRLVTYQTDARGQPVNAILVEETCEIDKELYLGAVVDRATRRVVIMASTEGGVEIEKVAHETPEKIFKVVVDPLVGVMPFQCRETAFKLGLKDDQIKQFTHLMMGLGKMFVDCDLSLLEINPLVITKSGQLICLDGKINIDGNALFRQPKLKNMRDVSQEDDRENRASDWELNYIPLDGTIGCMVNGAGLAMATMDVIKLHGGEPANFLDVGGGATKERVSEALKIIVSDEKVKGILVNIFGGIVRCDLIADGILAAVKEVDVKIPVVVRLEGNNAQLGAEILNKSNLNVIAATSLTDAAKKIVAAVSE.

Residues 9-244 (KQLFASYGLP…VSQEDDRENR (236 aa)) enclose the ATP-grasp domain. ATP is bound by residues Lys-46, 53–55 (GRG), Glu-99, Cys-102, and Glu-107. Positions 199 and 213 each coordinate Mg(2+). Substrate contacts are provided by residues Asn-264 and 321-323 (GIV).

The protein belongs to the succinate/malate CoA ligase beta subunit family. Heterotetramer of two alpha and two beta subunits. Requires Mg(2+) as cofactor.

The catalysed reaction is succinate + ATP + CoA = succinyl-CoA + ADP + phosphate. The enzyme catalyses GTP + succinate + CoA = succinyl-CoA + GDP + phosphate. It participates in carbohydrate metabolism; tricarboxylic acid cycle; succinate from succinyl-CoA (ligase route): step 1/1. Succinyl-CoA synthetase functions in the citric acid cycle (TCA), coupling the hydrolysis of succinyl-CoA to the synthesis of either ATP or GTP and thus represents the only step of substrate-level phosphorylation in the TCA. The beta subunit provides nucleotide specificity of the enzyme and binds the substrate succinate, while the binding sites for coenzyme A and phosphate are found in the alpha subunit. The protein is Succinate--CoA ligase [ADP-forming] subunit beta of Legionella pneumophila (strain Paris).